Consider the following 345-residue polypeptide: Anthranilate phosphoribosyltransferase 1 (345 aa).

5-phospho-alpha-D-ribose 1-diphosphate contacts are provided by residues glycine 86, 89–90 (GD), threonine 94, 96–99 (NIST), 114–122 (KHGGRGVSS), and serine 126. Anthranilate is bound at residue glycine 86. Serine 98 lines the Mg(2+) pocket. Arginine 172 provides a ligand contact to anthranilate. Mg(2+)-binding residues include aspartate 231 and glutamate 232.

Belongs to the anthranilate phosphoribosyltransferase family. In terms of assembly, homodimer. The cofactor is Mg(2+).

The enzyme catalyses N-(5-phospho-beta-D-ribosyl)anthranilate + diphosphate = 5-phospho-alpha-D-ribose 1-diphosphate + anthranilate. It participates in amino-acid biosynthesis; L-tryptophan biosynthesis; L-tryptophan from chorismate: step 2/5. Functionally, catalyzes the transfer of the phosphoribosyl group of 5-phosphorylribose-1-pyrophosphate (PRPP) to anthranilate to yield N-(5'-phosphoribosyl)-anthranilate (PRA). This Ralstonia nicotianae (strain ATCC BAA-1114 / GMI1000) (Ralstonia solanacearum) protein is Anthranilate phosphoribosyltransferase 1.